The sequence spans 270 residues: NAD(P)H-hydrate epimerase (270 aa).

Positions 25 to 234 (FQQLMDLMQN…DLLAPEAIYQ (210 aa)) constitute a YjeF N-terminal domain. Residue 73 to 77 (DNGGQ) coordinates (6S)-NADPHX. Residues asparagine 74 and aspartate 144 each coordinate K(+). (6S)-NADPHX-binding positions include 148–154 (GVGLYGH) and glutamate 177. Threonine 180 is a K(+) binding site.

The protein belongs to the NnrE/AIBP family. Requires K(+) as cofactor.

The enzyme catalyses (6R)-NADHX = (6S)-NADHX. It carries out the reaction (6R)-NADPHX = (6S)-NADPHX. Its function is as follows. Catalyzes the epimerization of the S- and R-forms of NAD(P)HX, a damaged form of NAD(P)H that is a result of enzymatic or heat-dependent hydration. This is a prerequisite for the S-specific NAD(P)H-hydrate dehydratase to allow the repair of both epimers of NAD(P)HX. The polypeptide is NAD(P)H-hydrate epimerase (Legionella pneumophila subsp. pneumophila (strain Philadelphia 1 / ATCC 33152 / DSM 7513)).